The chain runs to 279 residues: Phosphatidylglycerol--prolipoprotein diacylglyceryl transferase (279 aa).

The next 3 membrane-spanning stretches (helical) occupy residues 18-38, 55-75, and 89-109; these read LSVR…YFVA, IIFY…VIFQ, and IWHG…AGVI. Arginine 137 lines the a 1,2-diacyl-sn-glycero-3-phospho-(1'-sn-glycerol) pocket. A run of 2 helical transmembrane segments spans residues 203–223 and 235–255; these read LGET…FIEG and IRVA…LIVY.

The protein belongs to the Lgt family.

Its subcellular location is the cell membrane. It catalyses the reaction L-cysteinyl-[prolipoprotein] + a 1,2-diacyl-sn-glycero-3-phospho-(1'-sn-glycerol) = an S-1,2-diacyl-sn-glyceryl-L-cysteinyl-[prolipoprotein] + sn-glycerol 1-phosphate + H(+). It functions in the pathway protein modification; lipoprotein biosynthesis (diacylglyceryl transfer). In terms of biological role, catalyzes the transfer of the diacylglyceryl group from phosphatidylglycerol to the sulfhydryl group of the N-terminal cysteine of a prolipoprotein, the first step in the formation of mature lipoproteins. The sequence is that of Phosphatidylglycerol--prolipoprotein diacylglyceryl transferase from Staphylococcus aureus (strain USA300).